The sequence spans 390 residues: Lipid-A-disaccharide synthase (390 aa).

Belongs to the LpxB family.

It catalyses the reaction a lipid X + a UDP-2-N,3-O-bis[(3R)-3-hydroxyacyl]-alpha-D-glucosamine = a lipid A disaccharide + UDP + H(+). Its pathway is bacterial outer membrane biogenesis; LPS lipid A biosynthesis. In terms of biological role, condensation of UDP-2,3-diacylglucosamine and 2,3-diacylglucosamine-1-phosphate to form lipid A disaccharide, a precursor of lipid A, a phosphorylated glycolipid that anchors the lipopolysaccharide to the outer membrane of the cell. The protein is Lipid-A-disaccharide synthase of Rickettsia felis (strain ATCC VR-1525 / URRWXCal2) (Rickettsia azadi).